Reading from the N-terminus, the 138-residue chain is ATP synthase epsilon chain (138 aa).

Belongs to the ATPase epsilon chain family. In terms of assembly, F-type ATPases have 2 components, CF(1) - the catalytic core - and CF(0) - the membrane proton channel. CF(1) has five subunits: alpha(3), beta(3), gamma(1), delta(1), epsilon(1). CF(0) has three main subunits: a, b and c.

It is found in the cell inner membrane. In terms of biological role, produces ATP from ADP in the presence of a proton gradient across the membrane. This Psychrobacter arcticus (strain DSM 17307 / VKM B-2377 / 273-4) protein is ATP synthase epsilon chain.